The primary structure comprises 269 residues: 4-hydroxy-tetrahydrodipicolinate reductase (269 aa).

Residues 8-13 (GASGRM), Glu-34, 98-100 (GTT), and 122-125 (APNM) each bind NAD(+). Catalysis depends on His-155, which acts as the Proton donor/acceptor. A (S)-2,3,4,5-tetrahydrodipicolinate-binding site is contributed by His-156. Catalysis depends on Lys-159, which acts as the Proton donor. 165-166 (GT) serves as a coordination point for (S)-2,3,4,5-tetrahydrodipicolinate.

This sequence belongs to the DapB family.

It is found in the cytoplasm. It carries out the reaction (S)-2,3,4,5-tetrahydrodipicolinate + NAD(+) + H2O = (2S,4S)-4-hydroxy-2,3,4,5-tetrahydrodipicolinate + NADH + H(+). It catalyses the reaction (S)-2,3,4,5-tetrahydrodipicolinate + NADP(+) + H2O = (2S,4S)-4-hydroxy-2,3,4,5-tetrahydrodipicolinate + NADPH + H(+). It functions in the pathway amino-acid biosynthesis; L-lysine biosynthesis via DAP pathway; (S)-tetrahydrodipicolinate from L-aspartate: step 4/4. In terms of biological role, catalyzes the conversion of 4-hydroxy-tetrahydrodipicolinate (HTPA) to tetrahydrodipicolinate. The chain is 4-hydroxy-tetrahydrodipicolinate reductase from Desulfotalea psychrophila (strain LSv54 / DSM 12343).